The chain runs to 258 residues: Acetylglutamate kinase (258 aa).

Residues 41–42, arginine 63, and asparagine 156 contribute to the substrate site; that span reads GG.

Belongs to the acetylglutamate kinase family. ArgB subfamily. In terms of assembly, homodimer.

It is found in the cytoplasm. The catalysed reaction is N-acetyl-L-glutamate + ATP = N-acetyl-L-glutamyl 5-phosphate + ADP. It participates in amino-acid biosynthesis; L-arginine biosynthesis; N(2)-acetyl-L-ornithine from L-glutamate: step 2/4. In terms of biological role, catalyzes the ATP-dependent phosphorylation of N-acetyl-L-glutamate. The protein is Acetylglutamate kinase of Geobacillus stearothermophilus (Bacillus stearothermophilus).